A 471-amino-acid polypeptide reads, in one-letter code: Intraflagellar transport protein 46 homolog (471 aa).

Disordered stretches follow at residues 1-202 and 226-246; these read MSSE…SNMR and SRLE…EDDD. Composition is skewed to acidic residues over residues 89–99 and 231–246; these read SEPQEVIDVND and DSSN…EDDD.

This sequence belongs to the IFT46 family. In terms of assembly, component of the IFT complex B composed of at least che-2, che-13, dyf-1, dyf-3, dyf-6, dyf-11, dyf-13, ift-20, ift-74, ift-81, ifta-2, osm-1, osm-5 and osm-6. As to expression, expressed in the hypodermis and sensory neurons including inner labial, PDE, amphid and phasmid neurons.

The protein resides in the cell projection. It localises to the cilium. Its subcellular location is the cytoplasm. The protein localises to the cytoskeleton. It is found in the cilium basal body. The protein resides in the dendrite. It localises to the perikaryon. Its function is as follows. Component of the intraflagellar transport (IFT) complex B required for transport of proteins in the motile cilium. May be required for ciliary entrance and transport of specific ciliary cargo proteins such as che-3 which are related to motility. Required for normal morphology and function of ciliated amphid sensory neurons. The chain is Intraflagellar transport protein 46 homolog from Caenorhabditis elegans.